The sequence spans 391 residues: Mycofactocin maturase MftC (391 aa).

The Radical SAM core domain maps to 16-232 (LDAPICLTWE…KGERVLTGDS (217 aa)). 11 residues coordinate [4Fe-4S] cluster: C30, C34, C37, C251, C258, C269, C310, C313, C319, C323, and C341. The disordered stretch occupies residues 340–391 (ECVQGHSEPALARERHLPRPRADHSRGRRVSKPVPLTLSMRPPKRPCNESPV). The span at 350–364 (LARERHLPRPRADHS) shows a compositional bias: basic and acidic residues.

This sequence belongs to the radical SAM superfamily. [4Fe-4S] cluster is required as a cofactor.

It carries out the reaction [mycofactocin precursor peptide]-C-terminal glycyl-L-valyl-L-tyrosine + S-adenosyl-L-methionine = [mycofactocin precursor peptide]-C-terminal glycyl-N-{[2-(4-hydroxyphenyl)ethenyl]-3-methylbutanamide} + 5'-deoxyadenosine + L-methionine + CO2. It catalyses the reaction [mycofactocin precursor peptide]-C-terminal glycyl-N-{[2-(4-hydroxyphenyl)ethenyl]-3-methylbutanamide} + AH2 + S-adenosyl-L-methionine = [mycofactocin precursor peptide]-C-terminal glycyl-N-{5-[(4-hydroxyphenyl)methyl]-4,4-dimethyl-2-oxopyrrolidin-3-yl}acetamide + 5'-deoxyadenosine + L-methionine + A + H(+). Radical S-adenosylmethionine (SAM) enzyme responsible for the first step of the biosynthesis of the enzyme cofactor mycofactocin (MFT). Catalyzes two reactions at the C-terminus of the mycofactocin precursor (the MftA peptide). The first one is the oxidative decarboxylation of the C-terminal L-tyrosine of MftA, forming an unsaturated tyramine moiety. The second reaction is the cross-linking of the tyramine with the penultimate L-valine residue, forming a five-membered lactam ring. Its activity requires the presence of the MftB chaperone. The sequence is that of Mycofactocin maturase MftC (mftC) from Mycobacterium tuberculosis (strain CDC 1551 / Oshkosh).